A 348-amino-acid polypeptide reads, in one-letter code: Holliday junction branch migration complex subunit RuvB (348 aa).

The tract at residues 1-183 is large ATPase domain (RuvB-L); that stretch reads MTEASRIVAP…FGIPVRLNFY (183 aa). Residues leucine 22, arginine 23, glycine 64, lysine 67, threonine 68, threonine 69, 130 to 132, arginine 173, tyrosine 183, and arginine 220 each bind ATP; that span reads EDF. Residue threonine 68 coordinates Mg(2+). The segment at 184 to 254 is small ATPAse domain (RuvB-S); that stretch reads TEDELEKIVS…VADHALGALE (71 aa). A head domain (RuvB-H) region spans residues 257 to 348; that stretch reads AAGLDAMDRR…SGLFGQDEDR (92 aa). Residues arginine 293, arginine 312, and arginine 317 each coordinate DNA. The disordered stretch occupies residues 329 to 348; that stretch reads LTEPSRDPAQSGLFGQDEDR.

Belongs to the RuvB family. Homohexamer. Forms an RuvA(8)-RuvB(12)-Holliday junction (HJ) complex. HJ DNA is sandwiched between 2 RuvA tetramers; dsDNA enters through RuvA and exits via RuvB. An RuvB hexamer assembles on each DNA strand where it exits the tetramer. Each RuvB hexamer is contacted by two RuvA subunits (via domain III) on 2 adjacent RuvB subunits; this complex drives branch migration. In the full resolvosome a probable DNA-RuvA(4)-RuvB(12)-RuvC(2) complex forms which resolves the HJ.

It is found in the cytoplasm. It catalyses the reaction ATP + H2O = ADP + phosphate + H(+). In terms of biological role, the RuvA-RuvB-RuvC complex processes Holliday junction (HJ) DNA during genetic recombination and DNA repair, while the RuvA-RuvB complex plays an important role in the rescue of blocked DNA replication forks via replication fork reversal (RFR). RuvA specifically binds to HJ cruciform DNA, conferring on it an open structure. The RuvB hexamer acts as an ATP-dependent pump, pulling dsDNA into and through the RuvAB complex. RuvB forms 2 homohexamers on either side of HJ DNA bound by 1 or 2 RuvA tetramers; 4 subunits per hexamer contact DNA at a time. Coordinated motions by a converter formed by DNA-disengaged RuvB subunits stimulates ATP hydrolysis and nucleotide exchange. Immobilization of the converter enables RuvB to convert the ATP-contained energy into a lever motion, pulling 2 nucleotides of DNA out of the RuvA tetramer per ATP hydrolyzed, thus driving DNA branch migration. The RuvB motors rotate together with the DNA substrate, which together with the progressing nucleotide cycle form the mechanistic basis for DNA recombination by continuous HJ branch migration. Branch migration allows RuvC to scan DNA until it finds its consensus sequence, where it cleaves and resolves cruciform DNA. This Nitrobacter winogradskyi (strain ATCC 25391 / DSM 10237 / CIP 104748 / NCIMB 11846 / Nb-255) protein is Holliday junction branch migration complex subunit RuvB.